We begin with the raw amino-acid sequence, 364 residues long: Lysophosphatidic acid receptor 1 (364 aa).

The Extracellular segment spans residues 1 to 50; that stretch reads MAAAFTSSPVVSQPQFTAMNEQQCFSNESIAFFYNRSGKYLATEWNTVTK. 2 cysteine pairs are disulfide-bonded: Cys-24–Cys-190 and Cys-188–Cys-195. Asn-27 and Asn-35 each carry an N-linked (GlcNAc...) asparagine glycan. Lys-39 is an a 1-acyl-sn-glycero-3-phosphate binding site. Residues 51 to 75 form a helical membrane-spanning segment; sequence LVMGLGITVCIFIMLANLLVMVAIY. Topologically, residues 76–83 are cytoplasmic; it reads VNRRFHFP. The chain crosses the membrane as a helical span at residues 84-107; that stretch reads IYYLMANLAAADFFAGLAYFYLMF. Topologically, residues 108–121 are extracellular; the sequence is NTGPNTRRLTVSTW. Residues 122-144 form a helical membrane-spanning segment; sequence LLRQGLIDTSLTVSVANLLAIAI. 124 to 129 contributes to the a 1-acyl-sn-glycero-3-phosphate binding site; that stretch reads RQGLID. Residues 145–163 are Cytoplasmic-facing; that stretch reads ERHITVFRMQLHARMSNRR. Residues 164-184 form a helical membrane-spanning segment; sequence VVVVIVVIWTMAIVMGAIPSV. Residues 185-204 are Extracellular-facing; that stretch reads GWNCICDIENCSNMAPLYSD. Residues 205–225 form a helical membrane-spanning segment; it reads SYLVFWAIFNLVTFVVMVVLY. Trp-210 is a binding site for a 1-acyl-sn-glycero-3-phosphate. The Cytoplasmic segment spans residues 226-255; it reads AHIFGYVRQRTMRMSRHSSGPRRNRDTMMS. A helical membrane pass occupies residues 256–280; the sequence is LLKTVVIVLGAFIICWTPGLVLLLL. At 281–294 the chain is on the extracellular side; sequence DVCCPQCDVLAYEK. A disulfide bridge links Cys-284 with Cys-287. Residues 295–315 traverse the membrane as a helical segment; it reads FFLLLAEFNSAMNPIIYSYRD. At 316 to 364 the chain is on the cytoplasmic side; that stretch reads KEMSATFRQILCCQRSENTSGPTEGSDRSASSLNHTILAGVHSNDHSVV. Ser-341 carries the phosphoserine modification. A Phosphothreonine modification is found at Thr-351.

Belongs to the G-protein coupled receptor 1 family. In terms of assembly, interacts with RALA and GRK2. Interacts with GNAQ and GNA13. Interacts with CD14; the interaction is enhanced by exposure to bacterial lipopolysaccharide (LPS). Post-translationally, N-glycosylated.

Its subcellular location is the cell surface. The protein localises to the cell membrane. It is found in the endosome. Receptor for lysophosphatidic acid (LPA). Plays a role in the reorganization of the actin cytoskeleton, cell migration, differentiation and proliferation, and thereby contributes to the responses to tissue damage and infectious agents. Activates downstream signaling cascades via the G(i)/G(o), G(12)/G(13), and G(q) families of heteromeric G proteins. Signaling inhibits adenylyl cyclase activity and decreases cellular cAMP levels. Signaling triggers an increase of cytoplasmic Ca(2+) levels. Activates RALA; this leads to the activation of phospholipase C (PLC) and the formation of inositol 1,4,5-trisphosphate. Signaling mediates activation of down-stream MAP kinases. Contributes to the regulation of cell shape. Promotes Rho-dependent reorganization of the actin cytoskeleton in neuronal cells and neurite retraction. Promotes the activation of Rho and the formation of actin stress fibers. Promotes formation of lamellipodia at the leading edge of migrating cells via activation of RAC1. Through its function as LPA receptor, plays a role in chemotaxis and cell migration, including responses to injury and wounding. Plays a role in triggering inflammation in response to bacterial lipopolysaccharide (LPS) via its interaction with CD14. Promotes cell proliferation in response to LPA. Inhibits the intracellular ciliogenesis pathway in response to LPA and through AKT1 activation. Required for normal skeleton development. May play a role in osteoblast differentiation. Required for normal brain development. Required for normal proliferation, survival and maturation of newly formed neurons in the adult dentate gyrus. Plays a role in pain perception and in the initiation of neuropathic pain. This is Lysophosphatidic acid receptor 1 (LPAR1) from Bos taurus (Bovine).